The chain runs to 200 residues: NAD(P)H dehydrogenase (quinone) (200 aa).

Positions 4 to 190 (VLVLYYSTYG…EGARFQGRHV (187 aa)) constitute a Flavodoxin-like domain. Residues 10–15 (STYGHV) and 78–80 (TRY) each bind FMN. Tyrosine 12 serves as a coordination point for NAD(+). Tryptophan 98 is a substrate binding site. FMN-binding positions include 113–119 (STASQHG) and histidine 134.

This sequence belongs to the WrbA family. It depends on FMN as a cofactor.

It carries out the reaction a quinone + NADH + H(+) = a quinol + NAD(+). The catalysed reaction is a quinone + NADPH + H(+) = a quinol + NADP(+). This is NAD(P)H dehydrogenase (quinone) from Methylobacterium radiotolerans (strain ATCC 27329 / DSM 1819 / JCM 2831 / NBRC 15690 / NCIMB 10815 / 0-1).